A 329-amino-acid polypeptide reads, in one-letter code: 4-hydroxythreonine-4-phosphate dehydrogenase (329 aa).

His-136 and Thr-137 together coordinate substrate. Positions 166, 211, and 266 each coordinate a divalent metal cation. The substrate site is built by Lys-274, Asn-283, and Arg-292.

This sequence belongs to the PdxA family. Homodimer. Zn(2+) is required as a cofactor. The cofactor is Mg(2+). It depends on Co(2+) as a cofactor.

Its subcellular location is the cytoplasm. It carries out the reaction 4-(phosphooxy)-L-threonine + NAD(+) = 3-amino-2-oxopropyl phosphate + CO2 + NADH. Its pathway is cofactor biosynthesis; pyridoxine 5'-phosphate biosynthesis; pyridoxine 5'-phosphate from D-erythrose 4-phosphate: step 4/5. Its function is as follows. Catalyzes the NAD(P)-dependent oxidation of 4-(phosphooxy)-L-threonine (HTP) into 2-amino-3-oxo-4-(phosphooxy)butyric acid which spontaneously decarboxylates to form 3-amino-2-oxopropyl phosphate (AHAP). This is 4-hydroxythreonine-4-phosphate dehydrogenase from Escherichia coli (strain SE11).